The chain runs to 471 residues: Nitrosourea synthase (471 aa).

Residues 177 to 328 (MWLVQFAPDF…GRMAREKIIK (152 aa)) form an HO-like region. Residues E189, E215, H225, E281, H311, D315, H318, H407, H409, and H448 each coordinate Fe(2+). Residues 397–459 (VEPRGELSNT…ANIESDECVY (63 aa)) are cupin.

As to quaternary structure, homodimer. Requires Fe(2+) as cofactor.

The catalysed reaction is N(omega)-methyl-L-arginine + 2 NADH + 3 O2 + H(+) = N(delta)-hydroxy-N(omega)-methyl-N(omega)-nitroso-L-citrulline + 2 NAD(+) + 3 H2O. It carries out the reaction N(omega)-methyl-L-arginine + NADH + O2 + H(+) = N(delta)-hydroxy-N(omega)-methyl-L-arginine + NAD(+) + H2O. It catalyses the reaction N(delta)-hydroxy-N(omega)-methyl-L-arginine + NADH + O2 = N(delta),N(omega')-dihydroxy-N(omega)-methyl-L-arginine + NAD(+) + H2O. The enzyme catalyses N(delta),N(omega')-dihydroxy-N(omega)-methyl-L-arginine + O2 = N(delta)-hydroxy-N(omega)-methyl-N(omega)-nitroso-L-citrulline + H2O. The catalysed reaction is 2 N(delta)-hydroxy-N(omega)-methyl-N(omega)-nitroso-L-citrulline + AH2 = 2 N(delta)-hydroxy-N(omega)-methyl-L-citrulline + 2 nitric oxide + A. It participates in antibiotic biosynthesis. Involved in the biosynthesis of the glucosamine-nitrosourea antibiotic streptozotocin (SZN). Catalyzes a complex multi-step reaction: the overall reaction is an oxidative rearrangement of the guanidine group of N(omega)-methyl-L-arginine (L-NMA), generating an N-nitrosourea product. SznF first hydroxylates L-NMA to form N(delta)-hydroxy-N(omega)-methyl-L-arginine (L-HMA), which is further hydroxylated to give N(delta)-hydroxy-N(omega)-hydroxy-N(omega)-methyl-L-arginine (L-DHMA). Subsequently, an oxidative rearrangement converts this intermediate to N(delta)-hydroxy-N(omega)-methyl-N(omega)-nitroso-L-citrulline. This product is unstable, and degrades non-enzymically into nitric oxide and the denitrosated product N(delta)-hydroxy-N(omega)-methyl-L-citrulline. The polypeptide is Nitrosourea synthase (Streptomyces achromogenes subsp. streptozoticus).